Here is a 480-residue protein sequence, read N- to C-terminus: MVFEFVLSLFNSVSGNHKIIGISYLWLAYWFGMIGFYMSVLIRTELGMSGLKIITMDTLEIYNLLFTLHGLIMVFFNIMTGLFGGIGNYLYPVLLGSCDVVYPRVNLYSLLLQPIGFVLVVSSVYLEIGSGTGWTLYPPLSTSLSNIGIDLIIFGLLAAGIASTLSSINFITTFASIKTIGFVIDRISPAAWSIVLTSFLLLLSLPVVTAVFLMVFFDRNHSTMFFESSNSGDPILYQHLFWFFGHPEVYIMILPGFGIISLLLSTYTTKEMFGNQTMILAMGSIALLGCLVWGHHMYTSGLEADTRGYFTTVTILIALPTGNKIFNWVTTLQCVESIKSLGLILFAVLFIVNFVIGGTTGVVLGNAGLDVVLHDTVYVVGHFHFVLSIGAIISLICFIVYIQRMLFGIILSNRLLSLMAPIFMIAVLFTFLPMHFTGFSPLPRRIPDYPDEMWGWNFICTLGATMMLVLKLTVLFIISL.

Residues Ile22–Ile42 form a helical membrane-spanning segment. Positions 45 and 50 each coordinate Ca(2+). 8 helical membrane passes run Leu64–Gly84, Ser109–Gly129, Leu151–Ile171, Ile194–Met214, Leu240–Ile260, Met278–Tyr298, Tyr309–Val329, and Leu343–Val363. Fe(II)-heme a is bound at residue His69. Residue His246 participates in Cu cation binding. A cross-link (1'-histidyl-3'-tyrosine (His-Tyr)) is located at residues His246–Tyr250. Tyr250 provides a ligand contact to O2. Cu cation is bound by residues His295 and His296. Mg(2+) is bound by residues His374 and Asp375. His382 contributes to the heme a3 binding site. 2 consecutive transmembrane segments (helical) span residues His382–Ile402 and Leu416–Phe436. His384 contributes to the Fe(II)-heme a binding site. Pro447 contacts Ca(2+). Residues Phe458–Ile478 form a helical membrane-spanning segment.

This sequence belongs to the heme-copper respiratory oxidase family. Component of the cytochrome c oxidase (complex IV, CIV), a multisubunit enzyme composed of a catalytic core of 3 subunits and several supernumerary subunits. The complex exists as a monomer or a dimer and forms supercomplexes (SCs) in the inner mitochondrial membrane with ubiquinol-cytochrome c oxidoreductase (cytochrome b-c1 complex, complex III, CIII). Heme serves as cofactor. Requires Cu cation as cofactor.

The protein localises to the mitochondrion inner membrane. The catalysed reaction is 4 Fe(II)-[cytochrome c] + O2 + 8 H(+)(in) = 4 Fe(III)-[cytochrome c] + 2 H2O + 4 H(+)(out). The protein operates within energy metabolism; oxidative phosphorylation. Its function is as follows. Component of the cytochrome c oxidase, the last enzyme in the mitochondrial electron transport chain which drives oxidative phosphorylation. The respiratory chain contains 3 multisubunit complexes succinate dehydrogenase (complex II, CII), ubiquinol-cytochrome c oxidoreductase (cytochrome b-c1 complex, complex III, CIII) and cytochrome c oxidase (complex IV, CIV), that cooperate to transfer electrons derived from NADH and succinate to molecular oxygen, creating an electrochemical gradient over the inner membrane that drives transmembrane transport and the ATP synthase. Cytochrome c oxidase is the component of the respiratory chain that catalyzes the reduction of oxygen to water. Electrons originating from reduced cytochrome c in the intermembrane space (IMS) are transferred via the dinuclear copper A center (CU(A)) of subunit 2 and heme A of subunit 1 to the active site in subunit 1, a binuclear center (BNC) formed by heme A3 and copper B (CU(B)). The BNC reduces molecular oxygen to 2 water molecules using 4 electrons from cytochrome c in the IMS and 4 protons from the mitochondrial matrix. This is Cytochrome c oxidase subunit 1 (MT-CO1) from Theileria annulata.